A 180-amino-acid chain; its full sequence is MGLTISSLFSRLFGKKQMRILMVGLDAAGKTTILYKLKLGEIVTTIPTIGFNVETVEYKNICFTVWDVGGQDKIRPLWRHYFQNTQGLIFVVDSNDRERIQEAAEELQKMLQEDELRDAVLLVFANKQDLPNAMAISEMTDKLTLQTLRNRTWYVQATCATQGTGLYEGLDWLSNELSKR.

Residue glycine 2 is the site of N-myristoyl glycine attachment. Residues 24–31 (GLDAAGKT), 67–71 (DVGGQ), and 126–129 (NKQD) each bind GTP.

This sequence belongs to the small GTPase superfamily. Arf family.

Its subcellular location is the golgi apparatus. In terms of biological role, GTP-binding protein involved in protein trafficking; may modulate vesicle budding and uncoating within the Golgi apparatus. May be involved in ciliogenesis. In Xenopus laevis (African clawed frog), this protein is ADP-ribosylation factor 4 (arf4).